The following is a 217-amino-acid chain: Phosphatidylcholine synthase (217 aa).

A helical transmembrane segment spans residues A1 to L8. Residues V9–Y16 lie on the Periplasmic side of the membrane. The chain crosses the membrane as a helical span at residues I17 to A37. Over R38–D50 the chain is Cytoplasmic. The helical transmembrane segment at G51–L71 threads the bilayer. Over L72–M77 the chain is Periplasmic. Residues L78 to F98 traverse the membrane as a helical segment. Over C99–D107 the chain is Cytoplasmic. The chain crosses the membrane as a helical span at residues H108 to N128. Residue T129 is a topological domain, periplasmic. The helical transmembrane segment at S130 to V149 threads the bilayer. Topologically, residues K150–R164 are cytoplasmic. Residues I165–L185 traverse the membrane as a helical segment. The Periplasmic segment spans residues I186–T191. Residues N192–Y212 traverse the membrane as a helical segment. Residues R213 to P217 are Cytoplasmic-facing.

The protein belongs to the CDP-alcohol phosphatidyltransferase class-I family. Requires Mn(2+) as cofactor.

Its subcellular location is the cell inner membrane. The catalysed reaction is a CDP-1,2-diacyl-sn-glycerol + choline = a 1,2-diacyl-sn-glycero-3-phosphocholine + CMP + H(+). Its function is as follows. Condenses choline with CDP-diglyceride to produce phosphatidylcholine and CMP. The sequence is that of Phosphatidylcholine synthase from Legionella bozemanae (Fluoribacter bozemanae).